The chain runs to 1203 residues: Metabotropic glutamate receptor 5 (1203 aa).

The N-terminal stretch at 1–20 (MVLLLILSVLLLKEDVRGSA) is a signal peptide. At 21–579 (QSSERRVVAH…QYLRWGDPEP (559 aa)) the chain is on the extracellular side. An intrachain disulfide couples C57 to C99. Y64 is a binding site for L-glutamate. N-linked (GlcNAc...) asparagine glycosylation occurs at N88. L-glutamate-binding positions include S151 and 172–174 (SAT). An N-linked (GlcNAc...) asparagine glycan is attached at N209. Y222 serves as a coordination point for L-glutamate. 8 cysteine pairs are disulfide-bonded: C240–C529, C275–C277, C364–C380, C418–C425, C510–C530, C514–C533, C536–C548, and C551–C564. L-glutamate is bound at residue D304. Residues N377 and N381 are each glycosylated (N-linked (GlcNAc...) asparagine). K395 serves as a coordination point for L-glutamate. Residue N444 is glycosylated (N-linked (GlcNAc...) asparagine). A helical transmembrane segment spans residues 580–602 (IAAVVFACLGLLATLFVTVIFII). Residues 603-612 (YRDTPVVKSS) are Cytoplasmic-facing. A helical transmembrane segment spans residues 613 to 635 (SRELCYIILAGICLGYLCTFCLI). Over 636–643 (AKPKQIYC) the chain is Extracellular. C643 and C732 are joined by a disulfide. Residues 644–666 (YLQRIGIGLSPAMSYSALVTKTN) traverse the membrane as a helical segment. Topologically, residues 667 to 692 (RIARILAGSKKKICTKKPRFMSACAQ) are cytoplasmic. A helical membrane pass occupies residues 693-713 (LVIAFILICIQLGIIVALFIM). Topologically, residues 714–736 (EPPDIMHDYPSIREVYLICNTTN) are extracellular. A glycan (N-linked (GlcNAc...) asparagine) is linked at N733. The helical transmembrane segment at 737–758 (LGVVTPLGYNGLLILSCTFYAF) threads the bilayer. Over 759 to 771 (KTRNVPANFNEAK) the chain is Cytoplasmic. The helical transmembrane segment at 772–794 (YIAFTMYTTCIIWLAFVPIYFGS) threads the bilayer. Over 795 to 797 (NYK) the chain is Extracellular. Residues 798-819 (IITMCFSVSLSATVALGCMFVP) form a helical membrane-spanning segment. Over 820–1203 (KVYIILAKPE…RDYTQSSSSL (384 aa)) the chain is Cytoplasmic. S860 is modified (phosphoserine). Omega-N-methylarginine is present on R868. Disordered regions lie at residues 892-970 (FTPK…GSGP), 1003-1054 (EESF…GSLM), and 1122-1182 (GAQG…ALCI). Residues 905 to 920 (TMSSSNGKSVTWAQNE) are compositionally biased toward polar residues. At R924 the chain carries Omega-N-methylarginine. Low complexity predominate over residues 1007–1017 (PAAARPRSPSP). Phosphoserine occurs at positions 1014 and 1016. Composition is skewed to polar residues over residues 1039 to 1054 (HSETAARSSSSQGSLM) and 1165 to 1176 (DSGSTTPNSPVS).

This sequence belongs to the G-protein coupled receptor 3 family. Interacts with RYR1, RYR2, ITPR1, SHANK1 and SHANK3. The PPXXF motif binds HOMER1, HOMER2 and HOMER3. Interacts with SIAH1 and TAMALIN. Interacts with NCDN. Interacts with NECAB2. Interacts with CAMK2A. As to expression, widely distributed in neuronal cells of the central nervous system.

The protein localises to the cell membrane. Its function is as follows. G-protein coupled receptor for glutamate. Ligand binding causes a conformation change that triggers signaling via guanine nucleotide-binding proteins (G proteins) and modulates the activity of down-stream effectors. Signaling activates a phosphatidylinositol-calcium second messenger system and generates a calcium-activated chloride current. Plays an important role in the regulation of synaptic plasticity and the modulation of the neural network activity. In Rattus norvegicus (Rat), this protein is Metabotropic glutamate receptor 5 (Grm5).